We begin with the raw amino-acid sequence, 103 residues long: N(4)-acetylcytidine amidohydrolase (103 aa).

Residues 6 to 100 (ITFFQRFQND…NQMQFYVIDF (95 aa)) enclose the ASCH domain. The active-site Proton acceptor is Lys21. The active-site Nucleophile is the Thr24. Residue Glu74 is the Proton donor of the active site.

Belongs to the N(4)-acetylcytidine amidohydrolase family.

It carries out the reaction N(4)-acetylcytidine + H2O = cytidine + acetate + H(+). The catalysed reaction is N(4)-acetyl-2'-deoxycytidine + H2O = 2'-deoxycytidine + acetate + H(+). It catalyses the reaction N(4)-acetylcytosine + H2O = cytosine + acetate + H(+). Its function is as follows. Catalyzes the hydrolysis of N(4)-acetylcytidine (ac4C). This chain is N(4)-acetylcytidine amidohydrolase (yqfB), found in Salmonella arizonae (strain ATCC BAA-731 / CDC346-86 / RSK2980).